We begin with the raw amino-acid sequence, 99 residues long: A-type ATP synthase subunit F (99 aa).

The protein belongs to the V-ATPase F subunit family. In terms of assembly, has multiple subunits with at least A(3), B(3), C, D, E, F, H, I and proteolipid K(x).

The protein localises to the cell membrane. In terms of biological role, component of the A-type ATP synthase that produces ATP from ADP in the presence of a proton gradient across the membrane. The chain is A-type ATP synthase subunit F from Methanothrix thermoacetophila (strain DSM 6194 / JCM 14653 / NBRC 101360 / PT) (Methanosaeta thermophila).